The primary structure comprises 227 residues: Large ribosomal subunit protein uL1 (227 aa).

Belongs to the universal ribosomal protein uL1 family. In terms of assembly, part of the 50S ribosomal subunit.

Functionally, binds directly to 23S rRNA. The L1 stalk is quite mobile in the ribosome, and is involved in E site tRNA release. Protein L1 is also a translational repressor protein, it controls the translation of the L11 operon by binding to its mRNA. This is Large ribosomal subunit protein uL1 from Brevibacillus brevis (strain 47 / JCM 6285 / NBRC 100599).